The chain runs to 268 residues: Pantothenate synthetase (268 aa).

ATP is bound at residue 18–25 (MGYLHEGH). The active-site Proton donor is the His25. Gln49 contacts (R)-pantoate. Gln49 lines the beta-alanine pocket. An ATP-binding site is contributed by 135–138 (GQKD). Gln141 contributes to the (R)-pantoate binding site. ATP is bound by residues Ile164 and 172-175 (LSSR).

It belongs to the pantothenate synthetase family. Homodimer.

Its subcellular location is the cytoplasm. The enzyme catalyses (R)-pantoate + beta-alanine + ATP = (R)-pantothenate + AMP + diphosphate + H(+). Its pathway is cofactor biosynthesis; (R)-pantothenate biosynthesis; (R)-pantothenate from (R)-pantoate and beta-alanine: step 1/1. In terms of biological role, catalyzes the condensation of pantoate with beta-alanine in an ATP-dependent reaction via a pantoyl-adenylate intermediate. This is Pantothenate synthetase from Dehalococcoides mccartyi (strain CBDB1).